A 360-amino-acid polypeptide reads, in one-letter code: A-type ATP synthase subunit C (360 aa).

Residues 1–25 form a disordered region; that stretch reads MRLLEKLWGQKPSRKSDKKKNGTSN.

Belongs to the V-ATPase V0D/AC39 subunit family. As to quaternary structure, has multiple subunits with at least A(3), B(3), C, D, E, F, H, I and proteolipid K(x).

Its subcellular location is the cell membrane. Its function is as follows. Component of the A-type ATP synthase that produces ATP from ADP in the presence of a proton gradient across the membrane. The sequence is that of A-type ATP synthase subunit C from Methanosarcina barkeri (strain Fusaro / DSM 804).